The primary structure comprises 246 residues: MRNFYSYNPTIGRTYVYDNKFYKNLGSVIKNAKRKQHLIEHLKEEKQLDPLDTFMVAEDPFLGPGKNQKLTLFKEVRNVKPDTMKLVVNWSGKEFLRETWTRFMEDSFPIVNDQEVMDIFLEANLKPTRPNRCYRFLAQHALRCDPDYVPHEVIRIVEPDYVGVGNEYRISLAKRGGGCPIMNLNSEYNNSFESFIERVIWENFYRNNVYIGTDSAEEEEILLELSLLFKVKEFAPDIPLYSGPAY.

Belongs to the polyhedrin family.

Its function is as follows. Major component of the virus occlusion bodies, which are large proteinaceous structures (polyhedra), that protect the virus from the outside environment for extended periods until they are ingested by insect larvae. This Lepidoptera (butterflies and moths) protein is Polyhedrin (PH).